The sequence spans 337 residues: Phosphatidate cytidylyltransferase, mitochondrial (337 aa).

It belongs to the TAM41 family. Mg(2+) is required as a cofactor. In terms of tissue distribution, brain and liver.

It localises to the mitochondrion inner membrane. It carries out the reaction a 1,2-diacyl-sn-glycero-3-phosphate + CTP + H(+) = a CDP-1,2-diacyl-sn-glycerol + diphosphate. It participates in phospholipid metabolism; CDP-diacylglycerol biosynthesis; CDP-diacylglycerol from sn-glycerol 3-phosphate: step 3/3. In terms of biological role, catalyzes the conversion of phosphatidic acid (PA) to CDP-diacylglycerol (CDP-DAG), an essential intermediate in the synthesis of phosphatidylglycerol, cardiolipin and phosphatidylinositol. This Rattus norvegicus (Rat) protein is Phosphatidate cytidylyltransferase, mitochondrial (Tamm41).